Here is an 83-residue protein sequence, read N- to C-terminus: Protein Vpr (83 aa).

Position 79 is a phosphoserine; by host (Ser79).

As to quaternary structure, interacts with human UNG.

The protein resides in the virion. It is found in the host nucleus. Stimulates gene expression driven by the HIV-2 LTR. Prevents infected cells from undergoing mitosis and proliferating, by inducing arrest or delay in the G2 phase of the cell cycle. Cell cycle arrest creates a favorable environment for maximizing viral expression and production. The chain is Protein Vpr from Pan troglodytes (Chimpanzee).